A 239-amino-acid chain; its full sequence is MARGCLCCLKYAMFLFNLIFWLCGCGLLGVGIWLSVSQGNFATFSPSFPSLSAANLVIAIGTIVMVTGFLGCLGAIKENRCLLLSFFIVLLIILLAELILIILFFVYMDKVNENAKKDLKEGLLLYNSENNVGLKNAWNIIQAEMHCCGVTDYRDWFLVLGENTVPDRCCMENSQGCGQNNTTLLWRTGCYEKVKQWFADNKHVLGTVGMCLLITQILGMAFSMTLFQHIHRTGKKYDA.

A run of 3 helical transmembrane segments spans residues 14-34 (FLFN…GIWL), 56-76 (LVIA…LGAI), and 86-106 (FFIV…LFFV). Asn-180 and Asn-181 each carry an N-linked (GlcNAc...) asparagine glycan. Residues 204–224 (VLGTVGMCLLITQILGMAFSM) form a helical membrane-spanning segment.

Belongs to the tetraspanin (TM4SF) family. As to quaternary structure, found in a complex with GP6. Glycosylated.

It is found in the membrane. The protein is Tetraspanin-9 (TSPAN9) of Ovis aries (Sheep).